Here is a 336-residue protein sequence, read N- to C-terminus: tRNA N6-adenosine threonylcarbamoyltransferase (336 aa).

H114 and H118 together coordinate Fe cation. Substrate-binding positions include 136–140 (LVSGG), D169, G182, D186, and N275. D301 lines the Fe cation pocket.

Belongs to the KAE1 / TsaD family. Requires Fe(2+) as cofactor.

It is found in the cytoplasm. It carries out the reaction L-threonylcarbamoyladenylate + adenosine(37) in tRNA = N(6)-L-threonylcarbamoyladenosine(37) in tRNA + AMP + H(+). Its function is as follows. Required for the formation of a threonylcarbamoyl group on adenosine at position 37 (t(6)A37) in tRNAs that read codons beginning with adenine. Is involved in the transfer of the threonylcarbamoyl moiety of threonylcarbamoyl-AMP (TC-AMP) to the N6 group of A37, together with TsaE and TsaB. TsaD likely plays a direct catalytic role in this reaction. The chain is tRNA N6-adenosine threonylcarbamoyltransferase from Streptococcus pneumoniae (strain Hungary19A-6).